The following is a 529-amino-acid chain: Peptide chain release factor 3 (529 aa).

The region spanning 11–280 (NSRRTFAIIS…AFINWAPEPK (270 aa)) is the tr-type G domain. GTP is bound by residues 20–27 (SHPDAGKT), 88–92 (DTPGH), and 142–145 (NKMD).

The protein belongs to the TRAFAC class translation factor GTPase superfamily. Classic translation factor GTPase family. PrfC subfamily.

It is found in the cytoplasm. Increases the formation of ribosomal termination complexes and stimulates activities of RF-1 and RF-2. It binds guanine nucleotides and has strong preference for UGA stop codons. It may interact directly with the ribosome. The stimulation of RF-1 and RF-2 is significantly reduced by GTP and GDP, but not by GMP. This chain is Peptide chain release factor 3, found in Acinetobacter baylyi (strain ATCC 33305 / BD413 / ADP1).